A 187-amino-acid chain; its full sequence is Elongation factor P (187 aa).

Belongs to the elongation factor P family.

Its subcellular location is the cytoplasm. It participates in protein biosynthesis; polypeptide chain elongation. Its function is as follows. Involved in peptide bond synthesis. Stimulates efficient translation and peptide-bond synthesis on native or reconstituted 70S ribosomes in vitro. Probably functions indirectly by altering the affinity of the ribosome for aminoacyl-tRNA, thus increasing their reactivity as acceptors for peptidyl transferase. In Flavobacterium psychrophilum (strain ATCC 49511 / DSM 21280 / CIP 103535 / JIP02/86), this protein is Elongation factor P.